Reading from the N-terminus, the 121-residue chain is uncharacterized protein (121 aa).

The chain crosses the membrane as a helical span at residues 65–84 (TILFYTPTLICFLFLQNFLY).

Its subcellular location is the membrane. This is an uncharacterized protein from Saccharomyces cerevisiae (strain ATCC 204508 / S288c) (Baker's yeast).